We begin with the raw amino-acid sequence, 90 residues long: Accessory gland-specific peptide 26Ab (90 aa).

The N-terminal stretch at 1-21 (MNYFAVLCIFSCICLWQFSDA) is a signal peptide.

Main cells of the accessory glands of males.

Its subcellular location is the secreted. It is found in the extracellular space. This protein is transferred from male to female during mating and may affect egglaying and behavior after mating. This is Accessory gland-specific peptide 26Ab (Acp26Ab) from Drosophila mauritiana (Fruit fly).